We begin with the raw amino-acid sequence, 169 residues long: Der GTPase-activating protein YihI (169 aa).

2 disordered regions span residues 1–99 and 146–169; these read MKPS…QAEL and SYDD…LRGN. The span at 10–19 shows a compositional bias: basic residues; sequence SKGHAKARRK. The span at 20 to 30 shows a compositional bias: basic and acidic residues; it reads TREELDQEARD. The span at 31-40 shows a compositional bias: basic residues; it reads RKRQKKRRGH. Over residues 49–58 the composition is skewed to polar residues; that stretch reads GNTTSGSKGQ. Over residues 147–159 the composition is skewed to acidic residues; it reads YDDDEEEEEDEKQ. Residues 160-169 are compositionally biased toward basic and acidic residues; it reads EDMMRLLRGN.

This sequence belongs to the YihI family. Interacts with Der.

Functionally, a GTPase-activating protein (GAP) that modifies Der/EngA GTPase function. May play a role in ribosome biogenesis. The polypeptide is Der GTPase-activating protein YihI (Escherichia coli O45:K1 (strain S88 / ExPEC)).